We begin with the raw amino-acid sequence, 127 residues long: Large ribosomal subunit protein mL55 (127 aa).

Residues 1–32 constitute a mitochondrion transit peptide; sequence MPLAILLSLLRHCGVRAALPTPRHLHTSPWRA. Position 84 is a phosphoserine (S84).

Belongs to the mitochondrion-specific ribosomal protein mL55 family. Component of the mitochondrial ribosome large subunit (39S) which comprises a 16S rRNA and about 50 distinct proteins.

Its subcellular location is the mitochondrion. This chain is Large ribosomal subunit protein mL55 (Mrpl55), found in Mus musculus (Mouse).